We begin with the raw amino-acid sequence, 311 residues long: MMKIIFMGTPDFSATVLKGLLDSGQYEVLAVVTQPDRAVGRKREIRMTPVKELALEYKLPVYQPEKLAKSSDLEELMNLEADGIVTAAFGQFLPSCLLDSVDFAVNVHASLLPKYRGGAPIHYALINGDEQAGVTIMEMVKEMDAGDMIASKATPIEETDNVGTLFEKLALIGRDLLLDVLPAYRAGQIIPQPQDPSQVTFSPNISPEEERIDWSKTNRQIFNQIRGMYPWPVAHTLLQGQRFKIYEADMMAGSGQPGQILSISKKELVVAAGKGALSLKTVQPAGKPKMAIVDFLNGLGRSLSLGDTFGK.

110–113 (SLLP) lines the (6S)-5,6,7,8-tetrahydrofolate pocket.

It belongs to the Fmt family.

It catalyses the reaction L-methionyl-tRNA(fMet) + (6R)-10-formyltetrahydrofolate = N-formyl-L-methionyl-tRNA(fMet) + (6S)-5,6,7,8-tetrahydrofolate + H(+). Functionally, attaches a formyl group to the free amino group of methionyl-tRNA(fMet). The formyl group appears to play a dual role in the initiator identity of N-formylmethionyl-tRNA by promoting its recognition by IF2 and preventing the misappropriation of this tRNA by the elongation apparatus. This Streptococcus sanguinis (strain SK36) protein is Methionyl-tRNA formyltransferase.